The primary structure comprises 306 residues: ATP phosphoribosyltransferase (306 aa).

Belongs to the ATP phosphoribosyltransferase family.

The protein localises to the cytoplasm. The catalysed reaction is 1-(5-phospho-beta-D-ribosyl)-ATP + diphosphate = 5-phospho-alpha-D-ribose 1-diphosphate + ATP. It functions in the pathway amino-acid biosynthesis; L-histidine biosynthesis; L-histidine from 5-phospho-alpha-D-ribose 1-diphosphate: step 1/9. Functionally, catalyzes the condensation of ATP and 5-phosphoribose 1-diphosphate to form N'-(5'-phosphoribosyl)-ATP (PR-ATP). Has a crucial role in the pathway because the rate of histidine biosynthesis seems to be controlled primarily by regulation of the enzymatic activity. This chain is ATP phosphoribosyltransferase (HIS1), found in Candida glabrata (strain ATCC 2001 / BCRC 20586 / JCM 3761 / NBRC 0622 / NRRL Y-65 / CBS 138) (Yeast).